A 484-amino-acid polypeptide reads, in one-letter code: MAAATQFLSQPSSLNPHQLKNQTSQRSRSIPVLSLKSTLKPLKRLSVKAAVVSQNSSKTVTKFDHCFKKSSDGFLYCEGTKVEDIMESVERRPFYLYSKPQITRNLEAYKEALEGVSSVIGYAIKANNNLKILEHLRSLGCGAVLVSGNELRLALRAGFDPTKCIFNGNGKSLEDLVLAAQEGVFVNVDSEFDLNNIVEASRISGKQVNVLLRINPDVDPQVHPYVATGNKNSKFGIRNEKLQWFLDQVKAHPKELKLVGAHCHLGSTITKVDIFRDAAVLMIEYIDEIRRQGFEVSYLNIGGGLGIDYYHAGAVLPTPMDLINTVRELVLSRDLNLIIEPGRSLIANTCCFVNHVTGVKTNGTKNFIVIDGSMAELIRPSLYDAYQHIELVSPPPAEAEVTKFDVVGPVCESADFLGKDRELPTPPQGAGLVVHDAGAYCMSMASTYNLKMRPPEYWVEEDGSITKIRHAETFDDHLRFFEGL.

The span at 1–28 (MAAATQFLSQPSSLNPHQLKNQTSQRSR) shows a compositional bias: polar residues. Residues 1–30 (MAAATQFLSQPSSLNPHQLKNQTSQRSRSI) form a disordered region. A chloroplast-targeting transit peptide spans 1–49 (MAAATQFLSQPSSLNPHQLKNQTSQRSRSIPVLSLKSTLKPLKRLSVKA). Residue alanine 50 is modified to N-acetylalanine. At lysine 125 the chain carries N6-(pyridoxal phosphate)lysine. Residues glycine 304 and 340 to 343 (EPGR) contribute to the pyridoxal 5'-phosphate site. Positions 343, 379, and 383 each coordinate substrate. The active-site Proton donor is the cysteine 411. 2 residues coordinate substrate: glutamate 412 and tyrosine 440. Position 440 (tyrosine 440) interacts with pyridoxal 5'-phosphate.

This sequence belongs to the Orn/Lys/Arg decarboxylase class-II family. LysA subfamily. As to quaternary structure, homodimer. It depends on pyridoxal 5'-phosphate as a cofactor.

The protein localises to the plastid. It localises to the chloroplast. The enzyme catalyses meso-2,6-diaminopimelate + H(+) = L-lysine + CO2. It participates in amino-acid biosynthesis; L-lysine biosynthesis via DAP pathway; L-lysine from DL-2,6-diaminopimelate: step 1/1. Functionally, specifically catalyzes the decarboxylation of meso-diaminopimelate (meso-DAP) to L-lysine. The sequence is that of Diaminopimelate decarboxylase 1, chloroplastic (LYSA1) from Arabidopsis thaliana (Mouse-ear cress).